Here is a 321-residue protein sequence, read N- to C-terminus: Urease accessory protein UreD (321 aa).

Belongs to the UreD family. In terms of assembly, ureD, UreF and UreG form a complex that acts as a GTP-hydrolysis-dependent molecular chaperone, activating the urease apoprotein by helping to assemble the nickel containing metallocenter of UreC. The UreE protein probably delivers the nickel.

The protein localises to the cytoplasm. Its function is as follows. Required for maturation of urease via the functional incorporation of the urease nickel metallocenter. This is Urease accessory protein UreD from Yersinia pseudotuberculosis serotype O:1b (strain IP 31758).